The primary structure comprises 198 residues: NAD(P)H dehydrogenase (quinone) (198 aa).

The Flavodoxin-like domain occupies 4 to 190 (ILVLYYSMYG…ILASFQGAHV (187 aa)). FMN-binding positions include 10–15 (SMYGHI) and 79–81 (TRF). Residue Tyr12 participates in NAD(+) binding. Trp99 contacts substrate. FMN-binding positions include 114–119 (STGTGG) and His134.

It belongs to the WrbA family. Requires FMN as cofactor.

The catalysed reaction is a quinone + NADH + H(+) = a quinol + NAD(+). It carries out the reaction a quinone + NADPH + H(+) = a quinol + NADP(+). This Azotobacter vinelandii (strain DJ / ATCC BAA-1303) protein is NAD(P)H dehydrogenase (quinone).